Here is a 179-residue protein sequence, read N- to C-terminus: Inner membrane-spanning protein YciB (179 aa).

5 helical membrane-spanning segments follow: residues 22–42 (IYAA…YSWV), 50–70 (MALI…FFHN), 76–96 (WKVT…QWVM), 121–141 (LAWA…AFWL), and 149–169 (FKVF…GIYI).

The protein belongs to the YciB family.

It is found in the cell inner membrane. Functionally, plays a role in cell envelope biogenesis, maintenance of cell envelope integrity and membrane homeostasis. This chain is Inner membrane-spanning protein YciB, found in Shigella boydii serotype 4 (strain Sb227).